We begin with the raw amino-acid sequence, 295 residues long: Pyridoxal 5'-phosphate synthase subunit PdxS (295 aa).

D25 contributes to the D-ribose 5-phosphate binding site. K82 (schiff-base intermediate with D-ribose 5-phosphate) is an active-site residue. Position 154 (G154) interacts with D-ribose 5-phosphate. R166 is a D-glyceraldehyde 3-phosphate binding site. D-ribose 5-phosphate contacts are provided by residues G215 and G236–S237.

Belongs to the PdxS/SNZ family. As to quaternary structure, in the presence of PdxT, forms a dodecamer of heterodimers.

The catalysed reaction is aldehydo-D-ribose 5-phosphate + D-glyceraldehyde 3-phosphate + L-glutamine = pyridoxal 5'-phosphate + L-glutamate + phosphate + 3 H2O + H(+). It functions in the pathway cofactor biosynthesis; pyridoxal 5'-phosphate biosynthesis. Functionally, catalyzes the formation of pyridoxal 5'-phosphate from ribose 5-phosphate (RBP), glyceraldehyde 3-phosphate (G3P) and ammonia. The ammonia is provided by the PdxT subunit. Can also use ribulose 5-phosphate and dihydroxyacetone phosphate as substrates, resulting from enzyme-catalyzed isomerization of RBP and G3P, respectively. In Staphylococcus saprophyticus subsp. saprophyticus (strain ATCC 15305 / DSM 20229 / NCIMB 8711 / NCTC 7292 / S-41), this protein is Pyridoxal 5'-phosphate synthase subunit PdxS.